Consider the following 320-residue polypeptide: o-succinylbenzoate synthase (320 aa).

Catalysis depends on Lys133, which acts as the Proton donor. The Mg(2+) site is built by Asp161, Glu190, and Asp213. Lys235 (proton acceptor) is an active-site residue.

This sequence belongs to the mandelate racemase/muconate lactonizing enzyme family. MenC type 1 subfamily. The cofactor is a divalent metal cation.

It carries out the reaction (1R,6R)-6-hydroxy-2-succinyl-cyclohexa-2,4-diene-1-carboxylate = 2-succinylbenzoate + H2O. The protein operates within quinol/quinone metabolism; 1,4-dihydroxy-2-naphthoate biosynthesis; 1,4-dihydroxy-2-naphthoate from chorismate: step 4/7. It participates in quinol/quinone metabolism; menaquinone biosynthesis. In terms of biological role, converts 2-succinyl-6-hydroxy-2,4-cyclohexadiene-1-carboxylate (SHCHC) to 2-succinylbenzoate (OSB). In Escherichia coli O157:H7, this protein is o-succinylbenzoate synthase.